Reading from the N-terminus, the 193-residue chain is uncharacterized protein (193 aa).

This is an uncharacterized protein from Aquifex aeolicus (strain VF5).